A 252-amino-acid chain; its full sequence is MAGHSKWANIKRQKAVVDAKKGKTFTQLSRAIILAARSGIPDPSGNFQLRTAIDKAKAAGIPNDNIERAIAKGAGTFGGDNASLEEIRYEGYGPGGVAILIEALTDNRNRTAADLRVAFSKNGGNLGETGCVSWMFDQKGVCVVSGVVDEDQLLEASLEGGAESYEMTEDETAEVFTEVANLEILNQTLKDQGFKVTDAELRWIPSNNVEVTEPDQARSLLKLIDTLEGLDDVQNVTSNFEMSENLMAVSFA.

The protein belongs to the TACO1 family.

The protein resides in the cytoplasm. The sequence is that of Probable transcriptional regulatory protein Ava_1228 from Trichormus variabilis (strain ATCC 29413 / PCC 7937) (Anabaena variabilis).